The sequence spans 195 residues: Urease accessory protein UreG (195 aa).

Residue 9-16 (GPVGSGKT) coordinates GTP.

The protein belongs to the SIMIBI class G3E GTPase family. UreG subfamily. In terms of assembly, homodimer. UreD, UreF and UreG form a complex that acts as a GTP-hydrolysis-dependent molecular chaperone, activating the urease apoprotein by helping to assemble the nickel containing metallocenter of UreC. The UreE protein probably delivers the nickel.

It is found in the cytoplasm. Functionally, facilitates the functional incorporation of the urease nickel metallocenter. This process requires GTP hydrolysis, probably effectuated by UreG. The sequence is that of Urease accessory protein UreG from Aliarcobacter butzleri (strain RM4018) (Arcobacter butzleri).